Here is a 141-residue protein sequence, read N- to C-terminus: Ribosome-binding factor A (141 aa).

Belongs to the RbfA family. As to quaternary structure, monomer. Binds 30S ribosomal subunits, but not 50S ribosomal subunits or 70S ribosomes.

The protein localises to the cytoplasm. In terms of biological role, one of several proteins that assist in the late maturation steps of the functional core of the 30S ribosomal subunit. Associates with free 30S ribosomal subunits (but not with 30S subunits that are part of 70S ribosomes or polysomes). Required for efficient processing of 16S rRNA. May interact with the 5'-terminal helix region of 16S rRNA. In Beijerinckia indica subsp. indica (strain ATCC 9039 / DSM 1715 / NCIMB 8712), this protein is Ribosome-binding factor A.